The following is a 1070-amino-acid chain: DNA-directed RNA polymerase subunit beta (1070 aa).

This sequence belongs to the RNA polymerase beta chain family. As to quaternary structure, in plastids the minimal PEP RNA polymerase catalytic core is composed of four subunits: alpha, beta, beta', and beta''. When a (nuclear-encoded) sigma factor is associated with the core the holoenzyme is formed, which can initiate transcription.

Its subcellular location is the plastid. It is found in the chloroplast. The catalysed reaction is RNA(n) + a ribonucleoside 5'-triphosphate = RNA(n+1) + diphosphate. Its function is as follows. DNA-dependent RNA polymerase catalyzes the transcription of DNA into RNA using the four ribonucleoside triphosphates as substrates. The polypeptide is DNA-directed RNA polymerase subunit beta (Dioscorea elephantipes (Elephant's foot yam)).